The sequence spans 513 residues: Maturase K (513 aa).

The protein belongs to the intron maturase 2 family. MatK subfamily.

The protein localises to the plastid. It is found in the chloroplast. Usually encoded in the trnK tRNA gene intron. Probably assists in splicing its own and other chloroplast group II introns. This is Maturase K from Phragmites australis (Common reed).